A 242-amino-acid chain; its full sequence is Small ribosomal subunit protein uS2 (242 aa).

This sequence belongs to the universal ribosomal protein uS2 family.

This Shewanella piezotolerans (strain WP3 / JCM 13877) protein is Small ribosomal subunit protein uS2.